The primary structure comprises 494 residues: Glutamyl-tRNA(Gln) amidotransferase subunit A (494 aa).

Active-site charge relay system residues include Lys79 and Ser159. Ser183 functions as the Acyl-ester intermediate in the catalytic mechanism.

This sequence belongs to the amidase family. GatA subfamily. In terms of assembly, heterotrimer of A, B and C subunits.

The enzyme catalyses L-glutamyl-tRNA(Gln) + L-glutamine + ATP + H2O = L-glutaminyl-tRNA(Gln) + L-glutamate + ADP + phosphate + H(+). Functionally, allows the formation of correctly charged Gln-tRNA(Gln) through the transamidation of misacylated Glu-tRNA(Gln) in organisms which lack glutaminyl-tRNA synthetase. The reaction takes place in the presence of glutamine and ATP through an activated gamma-phospho-Glu-tRNA(Gln). The protein is Glutamyl-tRNA(Gln) amidotransferase subunit A of Bartonella tribocorum (strain CIP 105476 / IBS 506).